The primary structure comprises 446 residues: 5-hydroxytryptamine receptor 7 (446 aa).

Residues 1 to 84 (MMGVNSSGRP…INYGRAEKVV (84 aa)) are Extracellular-facing. N-linked (GlcNAc...) asparagine glycans are attached at residues Asn-5 and Asn-67. Residues 85-109 (IGSILTLITLLTIAGNCLVVISVCF) form a helical membrane-spanning segment. The Cytoplasmic segment spans residues 110 to 119 (VKKLRQPSNY). The chain crosses the membrane as a helical span at residues 120 to 141 (LIVSLALADLSVAVAVIPFVSV). Residues 142 to 153 (TDLIGGKWIFGH) lie on the Extracellular side of the membrane. The helical transmembrane segment at 154 to 179 (FFCNVFIAMDVMCCTASIMTLCVISI) threads the bilayer. An intrachain disulfide couples Cys-156 to Cys-232. A serotonin-binding site is contributed by Asp-163. Topologically, residues 180-199 (DRYLGITRPLTYPVRQNGKC) are cytoplasmic. The chain crosses the membrane as a helical span at residues 200-220 (MPKMILSVWLLSASITLPPLF). Residues 221 to 238 (GWAQNVNDDKVCLISQDF) lie on the Extracellular side of the membrane. The helical transmembrane segment at 239 to 261 (GYTIYSTAVAFYIPMSVMLFMYY) threads the bilayer. Topologically, residues 262–327 (RIYKAARKSA…SIFKREQKAA (66 aa)) are cytoplasmic. Residues 328-353 (TTLGIIVGAFTVCWLPFFLLSTARPF) traverse the membrane as a helical segment. The Extracellular portion of the chain corresponds to 354–364 (ICGTACSCIPL). A helical transmembrane segment spans residues 365–388 (WVERTCLWLGYANSLINPFIYAFF). Over 389-446 (NRDLRTTYRSLLQCQYRNINRKLSAAGMHEALKLAERPERPECVLQNSDYCRKKGHDS) the chain is Cytoplasmic. Residue Cys-402 is the site of S-palmitoyl cysteine attachment.

It belongs to the G-protein coupled receptor 1 family.

It localises to the cell membrane. Functionally, G-protein coupled receptor for 5-hydroxytryptamine (serotonin), a biogenic hormone that functions as a neurotransmitter, a hormone and a mitogen. Ligand binding causes a conformation change that triggers signaling via guanine nucleotide-binding proteins (G proteins) and modulates the activity of downstream effectors. HTR7 is coupled to G(s) G alpha proteins and mediates activation of adenylate cyclase activity. This is 5-hydroxytryptamine receptor 7 (HTR7) from Cavia porcellus (Guinea pig).